The following is a 524-amino-acid chain: Metal transporter Nramp2 (524 aa).

A disordered region spans residues 34-58; sequence AYDSDDKVSIAVSDSDSEDGGGGGG. A run of 12 helical transmembrane segments spans residues 70-90, 98-118, 155-175, 179-199, 207-227, 253-273, 295-315, 341-361, 389-409, 420-440, 457-477, and 486-506; these read LWRF…PGNL, AAAG…GALV, LALV…IKIL, TVPL…FLFL, LEAF…IMFG, AVGI…SALV, IESI…TTVF, YGTA…ASGQ, AMIT…FFDT, ALNV…ITLV, VISW…ILSF, and LVRS…VYLI.

Belongs to the NRAMP (TC 2.A.55) family.

The protein localises to the membrane. Probable metal transporter. This Oryza sativa subsp. japonica (Rice) protein is Metal transporter Nramp2 (NRAMP2).